Here is a 157-residue protein sequence, read N- to C-terminus: ATP synthase subunit b (157 aa).

Residues 7–29 form a helical membrane-spanning segment; sequence LISQAIAFSLFILFTARFVWPYL.

This sequence belongs to the ATPase B chain family. F-type ATPases have 2 components, F(1) - the catalytic core - and F(0) - the membrane proton channel. F(1) has five subunits: alpha(3), beta(3), gamma(1), delta(1), epsilon(1). F(0) has three main subunits: a(1), b(2) and c(10-14). The alpha and beta chains form an alternating ring which encloses part of the gamma chain. F(1) is attached to F(0) by a central stalk formed by the gamma and epsilon chains, while a peripheral stalk is formed by the delta and b chains.

It localises to the cell inner membrane. F(1)F(0) ATP synthase produces ATP from ADP in the presence of a proton or sodium gradient. F-type ATPases consist of two structural domains, F(1) containing the extramembraneous catalytic core and F(0) containing the membrane proton channel, linked together by a central stalk and a peripheral stalk. During catalysis, ATP synthesis in the catalytic domain of F(1) is coupled via a rotary mechanism of the central stalk subunits to proton translocation. Functionally, component of the F(0) channel, it forms part of the peripheral stalk, linking F(1) to F(0). This Nitrosomonas europaea (strain ATCC 19718 / CIP 103999 / KCTC 2705 / NBRC 14298) protein is ATP synthase subunit b.